Consider the following 320-residue polypeptide: Ribosomal protein L11 methyltransferase (320 aa).

Residues threonine 165, glycine 186, aspartate 208, and asparagine 251 each coordinate S-adenosyl-L-methionine.

This sequence belongs to the methyltransferase superfamily. PrmA family.

It localises to the cytoplasm. The enzyme catalyses L-lysyl-[protein] + 3 S-adenosyl-L-methionine = N(6),N(6),N(6)-trimethyl-L-lysyl-[protein] + 3 S-adenosyl-L-homocysteine + 3 H(+). In terms of biological role, methylates ribosomal protein L11. This is Ribosomal protein L11 methyltransferase from Limosilactobacillus fermentum (strain NBRC 3956 / LMG 18251) (Lactobacillus fermentum).